We begin with the raw amino-acid sequence, 690 residues long: Methionine--tRNA ligase (690 aa).

The 'HIGH' region signature appears at 20 to 30 (PYANGSIHLGH). 4 residues coordinate Zn(2+): cysteine 151, cysteine 154, cysteine 164, and cysteine 167. The short motif at 337–341 (KMSKS) is the 'KMSKS' region element. Residue lysine 340 coordinates ATP. The tRNA-binding domain maps to 589-690 (DFAKVDLRIA…EGAQPGMRVM (102 aa)).

The protein belongs to the class-I aminoacyl-tRNA synthetase family. MetG type 1 subfamily. As to quaternary structure, homodimer. The cofactor is Zn(2+).

The protein resides in the cytoplasm. The catalysed reaction is tRNA(Met) + L-methionine + ATP = L-methionyl-tRNA(Met) + AMP + diphosphate. Functionally, is required not only for elongation of protein synthesis but also for the initiation of all mRNA translation through initiator tRNA(fMet) aminoacylation. This chain is Methionine--tRNA ligase, found in Vibrio vulnificus (strain CMCP6).